The primary structure comprises 518 residues: Alpha-ionylideneethane synthase abl3 (518 aa).

Disordered regions lie at residues Ala294–Glu355 and Lys440–Lys466. Residues Thr299–Asp339 show a composition bias toward low complexity.

It belongs to the alpha-ionylideneethane synthase family.

It participates in hormone biosynthesis. Alpha-ionylideneethane synthase involved in the biosynthesis of abscisic acid (ABA), a phytohormone that acts antagonistically toward salicylic acid (SA), jasmonic acid (JA) and ethylene (ETH) signaling, to impede plant defense responses. During pathogen-host interaction, ABA plays a dual role in disease severity by increasing plant susceptibility and accelerating pathogenesis in the fungus itself. The first step of the pathway catalyzes the reaction from farnesyl diphosphate to alpha-ionylideneethane performed by the alpha-ionylideneethane synthase ABA3 via a three-step reaction mechanism involving 2 neutral intermediates, beta-farnesene and allofarnesene. The cytochrome P450 monooxygenase ABA1 might then be involved in the conversion of alpha-ionylideneethane to alpha-ionylideneacetic acid. Alpha-ionylideneacetic acid is further converted to abscisic acid in 2 steps involving the cytochrome P450 monooxygenase ABA2 and the short-chain dehydrogenase/reductase ABA4, via the intermediates 1'-deoxy-ABA or 1',4'-trans-diol-ABA, depending on the order of action of these 2 enzymes. ABA2 is responsible for the hydroxylation of carbon atom C-1' and ABA4 might be involved in the oxidation of the C-4' carbon atom. This is Alpha-ionylideneethane synthase abl3 from Pyricularia oryzae (strain Y34) (Rice blast fungus).